The primary structure comprises 388 residues: RNA binding motif protein, X-linked-like-1 (388 aa).

The 79-residue stretch at 8 to 86 (GKLFIGGLNT…KAIKVEQATK (79 aa)) folds into the RRM domain. Residues 61 to 80 (DAKDVARDMNGKSLDGKAIK) are compositionally biased toward basic and acidic residues. The interval 61-388 (DAKDVARDMN…SDRGGGQKQI (328 aa)) is disordered. Lys80 is covalently cross-linked (Glycyl lysine isopeptide (Lys-Gly) (interchain with G-Cter in SUMO2)). Ser88 bears the Phosphoserine mark. Over residues 148 to 161 (RGPPPRSGGPPPKR) the composition is skewed to pro residues. 2 stretches are compositionally biased toward basic and acidic residues: residues 191–212 (PRREPLPSRRDVYLSPRDDGYS) and 238–271 (YTYRDYSHSSSRDDYPSRGYGDRDGYGRDREYSD). The span at 320-332 (SRDSYSSSRSDLY) shows a compositional bias: low complexity. Basic and acidic residues-rich tracts occupy residues 333–344 (SSDRDRVGRQER) and 377–388 (SRSDRGGGQKQI).

The protein resides in the nucleus. RNA-binding protein which may be involved in pre-mRNA splicing. This Rattus norvegicus (Rat) protein is RNA binding motif protein, X-linked-like-1 (Rbmxl1).